The sequence spans 119 residues: Ribonuclease P protein component (119 aa).

Belongs to the RnpA family. Consists of a catalytic RNA component (M1 or rnpB) and a protein subunit.

The enzyme catalyses Endonucleolytic cleavage of RNA, removing 5'-extranucleotides from tRNA precursor.. RNaseP catalyzes the removal of the 5'-leader sequence from pre-tRNA to produce the mature 5'-terminus. It can also cleave other RNA substrates such as 4.5S RNA. The protein component plays an auxiliary but essential role in vivo by binding to the 5'-leader sequence and broadening the substrate specificity of the ribozyme. This is Ribonuclease P protein component from Escherichia fergusonii (strain ATCC 35469 / DSM 13698 / CCUG 18766 / IAM 14443 / JCM 21226 / LMG 7866 / NBRC 102419 / NCTC 12128 / CDC 0568-73).